Consider the following 309-residue polypeptide: Ribosomal RNA small subunit methyltransferase H (309 aa).

Residues 32–34 (AGH), D52, F79, D100, and Q107 each bind S-adenosyl-L-methionine.

This sequence belongs to the methyltransferase superfamily. RsmH family.

It localises to the cytoplasm. The enzyme catalyses cytidine(1402) in 16S rRNA + S-adenosyl-L-methionine = N(4)-methylcytidine(1402) in 16S rRNA + S-adenosyl-L-homocysteine + H(+). Functionally, specifically methylates the N4 position of cytidine in position 1402 (C1402) of 16S rRNA. This Mycoplasma capricolum subsp. capricolum (strain California kid / ATCC 27343 / NCTC 10154) protein is Ribosomal RNA small subunit methyltransferase H.